We begin with the raw amino-acid sequence, 182 residues long: UPF0397 protein SPP_0507 (182 aa).

A run of 5 helical transmembrane segments spans residues 10–30, 46–66, 73–93, 109–129, and 148–168; these read VVAV…NIPT, LLSI…GHAI, YGLW…VGLF, ILIF…VLAP, and IVAG…LLLA.

Belongs to the UPF0397 family.

Its subcellular location is the cell membrane. The polypeptide is UPF0397 protein SPP_0507 (Streptococcus pneumoniae (strain P1031)).